The sequence spans 494 residues: Nuclear distribution protein PAC1 (494 aa).

In terms of domain architecture, LisH spans 14-46 (QKNELDKSVLRYLNWNYKQTVRHEHAQDYESVR). Residues 90-123 (NSIVRLQKKIIELEQNTETLVSQIKDLNTQVSEL) are a coiled coil. WD repeat units follow at residues 153–192 (NVES…IPLA), 196–244 (SHTK…CKFQ), 251–292 (GHEH…SLKT), 295–334 (PHSQ…SVGT), 347–395 (HFIE…LMAH), 415–454 (GHLS…HVWE), and 457–492 (HTGF…SNVF).

Belongs to the WD repeat LIS1/nudF family. As to quaternary structure, self-associates. Interacts with NDL1 and dynein.

Its subcellular location is the cytoplasm. It localises to the cytoskeleton. The protein resides in the spindle pole. Functionally, positively regulates the activity of the minus-end directed microtubule motor protein dynein. Plays a central role in positioning the mitotic spindle at the bud neck during cell division. Targets cytoplasmic dynein to microtubule plus ends, thereby promoting dynein-mediated microtubule sliding along the bud cortex and consequently the movement of the mitotic spindle to the bud neck. The chain is Nuclear distribution protein PAC1 from Saccharomyces cerevisiae (strain Lalvin EC1118 / Prise de mousse) (Baker's yeast).